The primary structure comprises 177 residues: Transcriptional repressor NrdR (177 aa).

Residues 3–34 fold into a zinc finger; sequence CLFCQHTDTRVIDSRVSEDGATIRRRRECEAC. In terms of domain architecture, ATP-cone spans 49–139; sequence PVIIKKDGGR…VYRSFQDVAD (91 aa).

The protein belongs to the NrdR family. Zn(2+) serves as cofactor.

In terms of biological role, negatively regulates transcription of bacterial ribonucleotide reductase nrd genes and operons by binding to NrdR-boxes. This is Transcriptional repressor NrdR from Xylella fastidiosa (strain M23).